A 403-amino-acid chain; its full sequence is Phosphoglycerate kinase (403 aa).

Residues 21–23 (DFN), Arg-36, 59–62 (HLGR), Arg-119, and Arg-159 each bind substrate. ATP is bound by residues Lys-214, Gly-301, Glu-332, and 359-362 (GGDS).

It belongs to the phosphoglycerate kinase family. In terms of assembly, monomer.

It is found in the cytoplasm. The catalysed reaction is (2R)-3-phosphoglycerate + ATP = (2R)-3-phospho-glyceroyl phosphate + ADP. The protein operates within carbohydrate degradation; glycolysis; pyruvate from D-glyceraldehyde 3-phosphate: step 2/5. This Lactobacillus johnsonii (strain CNCM I-12250 / La1 / NCC 533) protein is Phosphoglycerate kinase.